We begin with the raw amino-acid sequence, 337 residues long: Glycerol-3-phosphate dehydrogenase [NAD(P)+] (337 aa).

Positions 12 and 107 each coordinate NADPH. The sn-glycerol 3-phosphate site is built by Lys107, Gly138, and Thr140. An NADPH-binding site is contributed by Ala142. The sn-glycerol 3-phosphate site is built by Lys193, Asp246, Ser256, Arg257, and Asn258. The active-site Proton acceptor is Lys193. Residue Arg257 participates in NADPH binding. NADPH-binding residues include Val282 and Glu284.

The protein belongs to the NAD-dependent glycerol-3-phosphate dehydrogenase family.

It localises to the cytoplasm. It carries out the reaction sn-glycerol 3-phosphate + NAD(+) = dihydroxyacetone phosphate + NADH + H(+). It catalyses the reaction sn-glycerol 3-phosphate + NADP(+) = dihydroxyacetone phosphate + NADPH + H(+). Its pathway is membrane lipid metabolism; glycerophospholipid metabolism. Functionally, catalyzes the reduction of the glycolytic intermediate dihydroxyacetone phosphate (DHAP) to sn-glycerol 3-phosphate (G3P), the key precursor for phospholipid synthesis. In Koribacter versatilis (strain Ellin345), this protein is Glycerol-3-phosphate dehydrogenase [NAD(P)+].